Consider the following 54-residue polypeptide: Rubredoxin (54 aa).

Residues 1–54 (MKKYVCVVCGYIYDPAEGDPDNGVNPGTSFEDIPDDWVCPLCGVGKDQFEPSEE) enclose the Rubredoxin-like domain. Residues C6, C9, C39, and C42 each coordinate Fe cation.

This sequence belongs to the rubredoxin family. Fe(3+) serves as cofactor.

In terms of biological role, rubredoxin is a small nonheme, iron protein lacking acid-labile sulfide. Its single Fe, chelated to 4 Cys, functions as an electron acceptor and may also stabilize the conformation of the molecule. Functions as an intermediate component in the electron transfer chain: NADH-&gt;NROR-&gt;Rd-&gt;FprA1/2 in which Rd serves as the proximal electron donor to the FDPs that exhibit H(2)O-forming NADH oxidase activity. Also functions as the proximal electron donor to the Dfx and revRbr proteins that display superoxide reductase (SOR) and NADH peroxidase activity, respectively. Therefore, is a key electron carrier in an efficient multienzyme complex that can scavenge O(2) and reactive oxygen species (ROS), and thus plays an important role in the oxidative stress defense system in C.acetobutylicum, an obligate anaerobic bacterium. This Clostridium acetobutylicum (strain ATCC 824 / DSM 792 / JCM 1419 / IAM 19013 / LMG 5710 / NBRC 13948 / NRRL B-527 / VKM B-1787 / 2291 / W) protein is Rubredoxin (rd).